The primary structure comprises 473 residues: 3-isopropylmalate dehydratase large subunit (473 aa).

Cys351, Cys414, and Cys417 together coordinate [4Fe-4S] cluster.

It belongs to the aconitase/IPM isomerase family. LeuC type 1 subfamily. As to quaternary structure, heterodimer of LeuC and LeuD. It depends on [4Fe-4S] cluster as a cofactor.

It carries out the reaction (2R,3S)-3-isopropylmalate = (2S)-2-isopropylmalate. Its pathway is amino-acid biosynthesis; L-leucine biosynthesis; L-leucine from 3-methyl-2-oxobutanoate: step 2/4. Functionally, catalyzes the isomerization between 2-isopropylmalate and 3-isopropylmalate, via the formation of 2-isopropylmaleate. The sequence is that of 3-isopropylmalate dehydratase large subunit from Acidovorax ebreus (strain TPSY) (Diaphorobacter sp. (strain TPSY)).